An 871-amino-acid chain; its full sequence is Zinc finger protein 473 (871 aa).

The KRAB domain occupies 6–75; sequence VTLKDVGMDF…AGGSPEATSP (70 aa). Disordered regions lie at residues 47 to 81 and 140 to 164; these read PPRP…TETK and NGES…TVST. A compositionally biased stretch (polar residues) spans 71-81; that stretch reads EATSPDVTETK. The span at 145–154 shows a compositional bias: basic and acidic residues; the sequence is TECKSHELKR. Lys148 participates in a covalent cross-link: Glycyl lysine isopeptide (Lys-Gly) (interchain with G-Cter in SUMO2). The C2H2-type 1 zinc-finger motif lies at 209–231; sequence YQCSECGKSFSGSYRLTQHWITH. The C2H2-type 2; degenerate zinc-finger motif lies at 265-286; it reads YVCNEYGTTFSQSTYLWHQKTH. A compositionally biased stretch (basic and acidic residues) spans 290-317; the sequence is KPCKSQDSDHPPSHDTQPGEHQKTHTDS. Positions 290–318 are disordered; the sequence is KPCKSQDSDHPPSHDTQPGEHQKTHTDSK. The interaction with SLBP/pre-mRNA complex stretch occupies residues 312 to 552; sequence KTHTDSKSYN…GFFVSGKILD (241 aa). 3 C2H2-type zinc fingers span residues 320–342, 347–369, and 375–397; these read YNCN…QKIH, YECS…QKTH, and SECQ…QALH. Residues 403 to 425 form a C2H2-type 6; degenerate zinc finger; sequence YKCNERGKSFRHNSTLKIHQRVH. A Glycyl lysine isopeptide (Lys-Gly) (interchain with G-Cter in SUMO2) cross-link involves residue Lys419. C2H2-type zinc fingers lie at residues 431-453, 459-481, 487-509, and 515-537; these read YKCS…RRIH, HKCQ…QAIH, YSCA…QKMH, and YECQ…ESVH. Glycyl lysine isopeptide (Lys-Gly) (interchain with G-Cter in SUMO2) cross-links involve residues Lys549 and Lys558. 2 C2H2-type zinc fingers span residues 562-584 and 591-613; these read FKCN…ERIH and FECD…QRIH. Residue Lys635 forms a Glycyl lysine isopeptide (Lys-Gly) (interchain with G-Cter in SUMO2) linkage. C2H2-type zinc fingers lie at residues 646 to 668, 674 to 696, 702 to 724, 730 to 752, 758 to 780, 786 to 808, 814 to 836, and 842 to 864; these read FKCN…QLIH, FKCS…ERTH, LVCN…QRIH, YVCD…QRIH, YVCQ…RRVH, YRCG…QRIH, YSCN…LRVH, and YQCQ…QRVH.

The protein belongs to the krueppel C2H2-type zinc-finger protein family. Interacts with the SLBP/pre-mRNA complex but not with SLBP alone. Interacts with LSM11 in a U7 snRNP-dependent manner.

Its subcellular location is the nucleus. In terms of biological role, involved in histone 3'-end pre-mRNA processing by associating with U7 snRNP and interacting with SLBP/pre-mRNA complex. Increases histone 3'-end pre-mRNA processing but has no effect on U7 snRNP levels, when overexpressed. Required for cell cycle progression from G1 to S phases. This is Zinc finger protein 473 (ZNF473) from Homo sapiens (Human).